Here is a 313-residue protein sequence, read N- to C-terminus: 2,3-dihydroxyphenylpropionate/2,3-dihydroxicinnamic acid 1,2-dioxygenase (313 aa).

The active-site Proton donor is His-115. His-179 (proton acceptor) is an active-site residue.

Belongs to the LigB/MhpB extradiol dioxygenase family. Homotetramer. Requires Fe(2+) as cofactor.

It catalyses the reaction 3-(2,3-dihydroxyphenyl)propanoate + O2 = (2Z,4E)-2-hydroxy-6-oxonona-2,4-dienedioate + H(+). The enzyme catalyses (2E)-3-(2,3-dihydroxyphenyl)prop-2-enoate + O2 = (2Z,4E,7E)-2-hydroxy-6-oxonona-2,4,7-trienedioate + H(+). It functions in the pathway aromatic compound metabolism; 3-phenylpropanoate degradation. Functionally, catalyzes the non-heme iron(II)-dependent oxidative cleavage of 2,3-dihydroxyphenylpropionic acid and 2,3-dihydroxicinnamic acid into 2-hydroxy-6-ketononadienedioate and 2-hydroxy-6-ketononatrienedioate, respectively. This is 2,3-dihydroxyphenylpropionate/2,3-dihydroxicinnamic acid 1,2-dioxygenase from Mycolicibacterium smegmatis (strain ATCC 700084 / mc(2)155) (Mycobacterium smegmatis).